The primary structure comprises 57 residues: Potassium channel toxin alpha-KTx 1.5 (57 aa).

The N-terminal stretch at M1–A20 is a signal peptide. Q21 is subject to Pyrrolidone carboxylic acid. Disulfide bonds link C27–C48, C33–C53, and C37–C55.

Belongs to the short scorpion toxin superfamily. Potassium channel inhibitor family. Alpha-KTx 01 subfamily. In terms of tissue distribution, expressed by the venom gland.

The protein localises to the secreted. Functionally, potent blocker of both large-conductance calcium-activated potassium channels (KCa1.1/KCNMA1) and voltage-gated potassium channels (Kv1.3/KCNA3). Has also been shown to moderately inhibit Kv1.2/KCNA2 and weakly inhibit Kv1.1/KCNA1 channels, as well as 5-hydroxytryptamine 3 receptors (HTR3A). This chain is Potassium channel toxin alpha-KTx 1.5, found in Olivierus martensii (Manchurian scorpion).